Here is a 123-residue protein sequence, read N- to C-terminus: Ribonuclease P protein component 1 (123 aa).

The segment at 73-93 (PDNGVGTAFKPAGGETRQTTG) is disordered.

This sequence belongs to the eukaryotic/archaeal RNase P protein component 1 family. Consists of a catalytic RNA component and at least 4-5 protein subunits.

The protein resides in the cytoplasm. The enzyme catalyses Endonucleolytic cleavage of RNA, removing 5'-extranucleotides from tRNA precursor.. Part of ribonuclease P, a protein complex that generates mature tRNA molecules by cleaving their 5'-ends. This chain is Ribonuclease P protein component 1, found in Halobacterium salinarum (strain ATCC 29341 / DSM 671 / R1).